The following is a 238-amino-acid chain: 7-cyano-7-deazaguanine synthase (238 aa).

Residue 14–24 participates in ATP binding; that stretch reads FSGGQDSATCL. The Zn(2+) site is built by C202, C217, C220, and C223.

It belongs to the QueC family. It depends on Zn(2+) as a cofactor.

The catalysed reaction is 7-carboxy-7-deazaguanine + NH4(+) + ATP = 7-cyano-7-deazaguanine + ADP + phosphate + H2O + H(+). It functions in the pathway purine metabolism; 7-cyano-7-deazaguanine biosynthesis. Its function is as follows. Catalyzes the ATP-dependent conversion of 7-carboxy-7-deazaguanine (CDG) to 7-cyano-7-deazaguanine (preQ(0)). This chain is 7-cyano-7-deazaguanine synthase, found in Nitrobacter winogradskyi (strain ATCC 25391 / DSM 10237 / CIP 104748 / NCIMB 11846 / Nb-255).